Here is a 101-residue protein sequence, read N- to C-terminus: Pterin-4-alpha-carbinolamine dehydratase (101 aa).

This sequence belongs to the pterin-4-alpha-carbinolamine dehydratase family.

The catalysed reaction is (4aS,6R)-4a-hydroxy-L-erythro-5,6,7,8-tetrahydrobiopterin = (6R)-L-erythro-6,7-dihydrobiopterin + H2O. This chain is Pterin-4-alpha-carbinolamine dehydratase (Pcd), found in Drosophila virilis (Fruit fly).